The following is a 295-amino-acid chain: 4-hydroxy-tetrahydrodipicolinate synthase (295 aa).

Thr46 lines the pyruvate pocket. Tyr134 serves as the catalytic Proton donor/acceptor. The active-site Schiff-base intermediate with substrate is Lys162. Ile205 contacts pyruvate.

This sequence belongs to the DapA family. In terms of assembly, homotetramer; dimer of dimers.

It is found in the cytoplasm. It catalyses the reaction L-aspartate 4-semialdehyde + pyruvate = (2S,4S)-4-hydroxy-2,3,4,5-tetrahydrodipicolinate + H2O + H(+). Its pathway is amino-acid biosynthesis; L-lysine biosynthesis via DAP pathway; (S)-tetrahydrodipicolinate from L-aspartate: step 3/4. In terms of biological role, catalyzes the condensation of (S)-aspartate-beta-semialdehyde [(S)-ASA] and pyruvate to 4-hydroxy-tetrahydrodipicolinate (HTPA). The sequence is that of 4-hydroxy-tetrahydrodipicolinate synthase from Anaeromyxobacter sp. (strain K).